Here is a 299-residue protein sequence, read N- to C-terminus: ATP phosphoribosyltransferase (299 aa).

This sequence belongs to the ATP phosphoribosyltransferase family. Long subfamily. The cofactor is Mg(2+).

The protein resides in the cytoplasm. The catalysed reaction is 1-(5-phospho-beta-D-ribosyl)-ATP + diphosphate = 5-phospho-alpha-D-ribose 1-diphosphate + ATP. The protein operates within amino-acid biosynthesis; L-histidine biosynthesis; L-histidine from 5-phospho-alpha-D-ribose 1-diphosphate: step 1/9. With respect to regulation, feedback inhibited by histidine. In terms of biological role, catalyzes the condensation of ATP and 5-phosphoribose 1-diphosphate to form N'-(5'-phosphoribosyl)-ATP (PR-ATP). Has a crucial role in the pathway because the rate of histidine biosynthesis seems to be controlled primarily by regulation of HisG enzymatic activity. In Campylobacter jejuni subsp. jejuni serotype O:23/36 (strain 81-176), this protein is ATP phosphoribosyltransferase.